Reading from the N-terminus, the 303-residue chain is Bifunctional protein FolD 2 (303 aa).

Residues 169–171 (GRS), Ser194, and Ile235 contribute to the NADP(+) site.

The protein belongs to the tetrahydrofolate dehydrogenase/cyclohydrolase family. In terms of assembly, homodimer.

The catalysed reaction is (6R)-5,10-methylene-5,6,7,8-tetrahydrofolate + NADP(+) = (6R)-5,10-methenyltetrahydrofolate + NADPH. It catalyses the reaction (6R)-5,10-methenyltetrahydrofolate + H2O = (6R)-10-formyltetrahydrofolate + H(+). It functions in the pathway one-carbon metabolism; tetrahydrofolate interconversion. Catalyzes the oxidation of 5,10-methylenetetrahydrofolate to 5,10-methenyltetrahydrofolate and then the hydrolysis of 5,10-methenyltetrahydrofolate to 10-formyltetrahydrofolate. The protein is Bifunctional protein FolD 2 of Ectopseudomonas mendocina (strain ymp) (Pseudomonas mendocina).